Here is a 370-residue protein sequence, read N- to C-terminus: Vasopressin V2 receptor (370 aa).

Residues 1–21 (MFMASTTSAVPWHLSQPTPAG) are compositionally biased toward polar residues. A disordered region spans residues 1–26 (MFMASTTSAVPWHLSQPTPAGNGSEG). The Extracellular portion of the chain corresponds to 1 to 38 (MFMASTTSAVPWHLSQPTPAGNGSEGELLTARDPLLAQ). A glycan (N-linked (GlcNAc...) asparagine) is linked at N22. Residues 39–63 (AELALLSTVFVAVALSNGLVLGALV) form a helical membrane-spanning segment. Residues 64-77 (RRGRRGRWAPMHVF) lie on the Cytoplasmic side of the membrane. A helical membrane pass occupies residues 78–98 (IGHLCLADLAVALFQVLPQLA). Residues 99-113 (WDATDRFRGPDALCR) are Extracellular-facing. The helical transmembrane segment at 114–135 (AVKYLQMVGMYASSYMILAMTL) threads the bilayer. Residues 136-159 (DRHRAICRPMLAHRHGGGTHWNRP) lie on the Cytoplasmic side of the membrane. A helical transmembrane segment spans residues 160–180 (VLLAWAFSLLFSLPQLFIFAQ). Over 181-199 (RDVDGSGVLDCWARFAEPW) the chain is Extracellular. The helical transmembrane segment at 200-219 (GLRAYVTWIALMVFVAPALG) threads the bilayer. Residues 220–270 (IAACQVLIFREIHASLGPGPVPRAGGPRRGCRPGSPAEGARVSAAVAKTVK) are Cytoplasmic-facing. A helical transmembrane segment spans residues 271 to 292 (MTLVIVIVYVLCWAPFFLVQLW). Over 293 to 307 (AAWDPEAPREGPPFV) the chain is Extracellular. A helical membrane pass occupies residues 308 to 327 (LLMLLASLNSCTNPWIYASF). Over 328 to 370 (SSSISSELRSLLCCTWRRAPPSPGPQEESCATASSFLAKDTPS) the chain is Cytoplasmic. Residues C340 and C341 are each lipidated (S-palmitoyl cysteine). The disordered stretch occupies residues 347-370 (PPSPGPQEESCATASSFLAKDTPS).

The protein belongs to the G-protein coupled receptor 1 family. Vasopressin/oxytocin receptor subfamily. Interacts with ARRDC4. Identified in a complex containing at least ARRDC4, V2R and HGS. Interacts with TMEM147.

Its subcellular location is the cell membrane. Its function is as follows. Receptor for arginine vasopressin. The activity of this receptor is mediated by G proteins which activate adenylate cyclase. Involved in renal water reabsorption. The polypeptide is Vasopressin V2 receptor (AVPR2) (Bos taurus (Bovine)).